The primary structure comprises 443 residues: Carboxypeptidase M (443 aa).

Residues 1 to 17 form the signal peptide; sequence MDRARLWLGLLLPVVAA. The Peptidase M14 domain occupies 21 to 311; it reads RYHHQEGMEA…ASLIEYIKQV (291 aa). The N-linked (GlcNAc...) asparagine glycan is linked to Asn-38. Positions 83 and 86 each coordinate Zn(2+). Intrachain disulfides connect Cys-138/Cys-285, Cys-242/Cys-284, and Cys-341/Cys-410. The N-linked (GlcNAc...) asparagine glycan is linked to Asn-164. His-190 provides a ligand contact to Zn(2+). Glu-281 (proton donor/acceptor) is an active-site residue. N-linked (GlcNAc...) asparagine glycosylation is present at Asn-363. Ser-423 carries the GPI-anchor amidated serine lipid modification. The propeptide at 424 to 443 is removed in mature form; sequence AATKPSLGVFFMTLLYVFFK.

It belongs to the peptidase M14 family. Zn(2+) serves as cofactor.

It is found in the cell membrane. The enzyme catalyses Cleavage of C-terminal arginine or lysine residues from polypeptides.. Specifically removes C-terminal basic residues (Arg or Lys) from peptides and proteins. It is believed to play important roles in the control of peptide hormone and growth factor activity at the cell surface, and in the membrane-localized degradation of extracellular proteins. This Mus musculus (Mouse) protein is Carboxypeptidase M (Cpm).